The following is a 198-amino-acid chain: NADH-quinone oxidoreductase subunit B (198 aa).

Residues 1-20 show a composition bias toward polar residues; that stretch reads MGLNPTQVSTSGSPQVSQPA. Positions 1–29 are disordered; it reads MGLNPTQVSTSGSPQVSQPATGVLDPRTG. [4Fe-4S] cluster contacts are provided by Cys-77, Cys-78, Cys-142, and Cys-172.

The protein belongs to the complex I 20 kDa subunit family. In terms of assembly, NDH-1 is composed of 14 different subunits. Subunits NuoB, C, D, E, F, and G constitute the peripheral sector of the complex. Requires [4Fe-4S] cluster as cofactor.

It is found in the cell inner membrane. It carries out the reaction a quinone + NADH + 5 H(+)(in) = a quinol + NAD(+) + 4 H(+)(out). NDH-1 shuttles electrons from NADH, via FMN and iron-sulfur (Fe-S) centers, to quinones in the respiratory chain. The immediate electron acceptor for the enzyme in this species is believed to be ubiquinone. Couples the redox reaction to proton translocation (for every two electrons transferred, four hydrogen ions are translocated across the cytoplasmic membrane), and thus conserves the redox energy in a proton gradient. This Afipia carboxidovorans (strain ATCC 49405 / DSM 1227 / KCTC 32145 / OM5) (Oligotropha carboxidovorans) protein is NADH-quinone oxidoreductase subunit B.